The sequence spans 446 residues: Tubulin beta-2 chain (446 aa).

The GTP site is built by Gln-11, Glu-69, Ser-138, Gly-142, Thr-143, Gly-144, Asn-204, and Asn-226. Glu-69 serves as a coordination point for Mg(2+).

The protein belongs to the tubulin family. In terms of assembly, dimer of alpha and beta chains. A typical microtubule is a hollow water-filled tube with an outer diameter of 25 nm and an inner diameter of 15 nM. Alpha-beta heterodimers associate head-to-tail to form protofilaments running lengthwise along the microtubule wall with the beta-tubulin subunit facing the microtubule plus end conferring a structural polarity. Microtubules usually have 13 protofilaments but different protofilament numbers can be found in some organisms and specialized cells. Mg(2+) is required as a cofactor.

The protein localises to the cytoplasm. Its subcellular location is the cytoskeleton. Tubulin is the major constituent of microtubules, a cylinder consisting of laterally associated linear protofilaments composed of alpha- and beta-tubulin heterodimers. Microtubules grow by the addition of GTP-tubulin dimers to the microtubule end, where a stabilizing cap forms. Below the cap, tubulin dimers are in GDP-bound state, owing to GTPase activity of alpha-tubulin. The protein is Tubulin beta-2 chain (tub2) of Hypocrea rufa (Trichoderma viride).